A 390-amino-acid chain; its full sequence is S-adenosylmethionine synthase 2 (390 aa).

E9 serves as a coordination point for Mg(2+). Residue H15 coordinates ATP. E43 contacts K(+). Residues E56 and Q99 each coordinate L-methionine. ATP-binding positions include 167 to 169 (DGK), 235 to 238 (SGRF), D246, 252 to 253 (RK), A269, K273, and K277. D246 contributes to the L-methionine binding site. K277 provides a ligand contact to L-methionine.

This sequence belongs to the AdoMet synthase family. As to quaternary structure, homotetramer. Mn(2+) serves as cofactor. The cofactor is Mg(2+). Requires Co(2+) as cofactor. K(+) is required as a cofactor.

It localises to the cytoplasm. It carries out the reaction L-methionine + ATP + H2O = S-adenosyl-L-methionine + phosphate + diphosphate. Its pathway is amino-acid biosynthesis; S-adenosyl-L-methionine biosynthesis; S-adenosyl-L-methionine from L-methionine: step 1/1. Its function is as follows. Catalyzes the formation of S-adenosylmethionine from methionine and ATP. The reaction comprises two steps that are both catalyzed by the same enzyme: formation of S-adenosylmethionine (AdoMet) and triphosphate, and subsequent hydrolysis of the triphosphate. This is S-adenosylmethionine synthase 2 (SAM2) from Petunia hybrida (Petunia).